A 1052-amino-acid chain; its full sequence is MAAAYLDPNLNHTPNSSTKTHLGTGMERSPGAMERVLKVFHYFESNSEPTTWASIIRHGDATDVRGIIQKIVDSHKVKHVACYGFRLSHLRSEEVHWLHVDMGVSSVREKYELAHPPEEWKYELRIRYLPKGFLNQFTEDKPTLNFFYQQVKSDYMLEIADQVDQEIALKLGCLEIRRSYWEMRGNALEKKSNYEVLEKDVGLKRFFPKSLLDSVKAKTLRKLIQQTFRQFANLNREESILKFFEILSPVYRFDKECFKCALGSSWIISVELAIGPEEGISYLTDKGCNPTHLADFTQVQTIQYSNSEDKDRKGMLQLKIAGAPEPLTVTAPSLTIAENMADLIDGYCRLVNGTSQSFIIRPQKEGERALPSIPKLANSEKQGMRTHAVSVSETDDYAEIIDEEDTYTMPSTRDYEIQRERIELGRCIGEGQFGDVHQGIYMSPENPALAVAIKTCKNCTSDSVREKFLQEALTMRQFDHPHIVKLIGVITENPVWIIMELCTLGELRSFLQVRKYSLDLASLILYAYQLSTALAYLESKRFVHRDIAARNVLVSSNDCVKLGDFGLSRYMEDSTYYKASKGKLPIKWMAPESINFRRFTSASDVWMFGVCMWEILMHGVKPFQGVKNNDVIGRIENGERLPMPPNCPPTLYSLMTKCWAYDPSRRPRFTELKAQLSTILEEEKAQQEERMRMESRRQATVSWDSGGSDEAPPKPSRPGYPSPRSSEGFYPSPQHMVQTNHYQVSGYPGSHGITAMAGSIYPGQASLLDQTDSWNHRPQEIAMWQPNVEDSTVLDLRGIGQVLPTHLMEERLIRQQQEMEEDQRWLEKEERFLKPDVRLSRGSIDREDGSLQGPIGNQHIYQPVGKPDPAAPPKKPPRPGAPGHLGSLASLSSPADSYNEGVKLQPQEISPPPTANLDRSNDKVYENVTGLVKAVIEMSSKIQPAPPEEYVPMVKEVGLALRTLLATVDETIPLLPASTHREIEMAQKLLNSDLGELINKMKLAQQYVMTSLQQEYKKQMLTAAHALAVDAKNLLDVIDQARLKMLGQTRPH.

Residues 1 to 27 (MAAAYLDPNLNHTPNSSTKTHLGTGME) form a disordered region. Residue A2 is modified to N-acetylalanine. Position 5 is a phosphotyrosine (Y5). Residues 10-21 (LNHTPNSSTKTH) are compositionally biased toward polar residues. T13 carries the phosphothreonine modification. 2 positions are modified to phosphoserine: S29 and S54. The 321-residue stretch at 35 to 355 (RVLKVFHYFE…GYCRLVNGTS (321 aa)) folds into the FERM domain. A Glycyl lysine isopeptide (Lys-Gly) (interchain with G-Cter in SUMO) cross-link involves residue K152. Phosphotyrosine; by autocatalysis is present on Y397. Y407 is modified (phosphotyrosine). The Protein kinase domain occupies 422–680 (IELGRCIGEG…ELKAQLSTIL (259 aa)). ATP-binding positions include 428–434 (IGEGQFG), K454, and 500–502 (ELC). D546 serves as the catalytic Proton acceptor. At Y570 the chain carries Phosphotyrosine. 2 positions are modified to phosphotyrosine; by RET and SRC: Y576 and Y577. S580 carries the post-translational modification Phosphoserine. Positions 684 to 697 (KAQQEERMRMESRR) are enriched in basic and acidic residues. Disordered stretches follow at residues 684–734 (KAQQ…PSPQ) and 839–922 (LSRG…RSND). The tract at residues 707–1052 (GSDEAPPKPS…LKMLGQTRPH (346 aa)) is interaction with TGFB1I1. Phosphoserine is present on S722. S732 bears the Phosphoserine; by CDK5 mark. The segment covering 839-849 (LSRGSIDREDG) has biased composition (basic and acidic residues). At S843 the chain carries Phosphoserine. Y861 carries the post-translational modification Phosphotyrosine. A compositionally biased stretch (pro residues) spans 869-880 (PAAPPKKPPRPG). Phosphoserine is present on residues S887 and S910. Positions 912–1052 (PPTANLDRSN…LKMLGQTRPH (141 aa)) are interaction with ARHGEF28. Position 914 is a phosphothreonine (T914). At Y925 the chain carries Phosphotyrosine.

Belongs to the protein kinase superfamily. Tyr protein kinase family. FAK subfamily. As to quaternary structure, interacts (via first Pro-rich region) with CAS family members (via SH3 domain), including BCAR1, BCAR3, and CASS4. Interacts with NEDD9 (via SH3 domain). Interacts with GIT1. Interacts with SORBS1. Interacts with ARHGEF28. Interacts with SHB. Part of a complex composed of THSD1, PTK2/FAK1, TLN1 and VCL. Interacts with PXN and TLN1. Interacts with STAT1. Interacts with DCC. Interacts with WASL. Interacts with ARHGEF7. Interacts with GRB2 and GRB7. Component of a complex that contains at least FER, CTTN and PTK2/FAK1. Interacts with BMX. Interacts with TGFB1I1. Interacts with STEAP4. Interacts with ZFYVE21. Interacts with ESR1. Interacts with PIK3R1 or PIK3R2. Interacts with SRC, FGR, FLT4 and RET. Interacts with EPHA2 in resting cells; activation of EPHA2 recruits PTPN11, leading to dephosphorylation of PTK2/FAK1 and dissociation of the complex. Interacts with EPHA1 (kinase activity-dependent). Interacts with CD4; this interaction requires the presence of HIV-1 gp120. Interacts with PIAS1. Interacts with ARHGAP26 and SHC1. Interacts with RB1CC1; this inhibits PTK2/FAK1 activity and activation of downstream signaling pathways. Interacts with P53/TP53 and MDM2. Interacts with LPXN (via LD motif 3). Interacts with MISP. Interacts with CIB1 isoform 2. Interacts with CD36. Interacts with EMP2; regulates PTK2 activation and localization. Interacts with DSCAM. Interacts with AMBRA1. Interacts (when tyrosine-phosphorylated) with tensin TNS1; the interaction is increased by phosphorylation of TNS1. Phosphorylated on tyrosine residues upon activation, e.g. upon integrin signaling. Tyr-397 is the major autophosphorylation site, but other kinases can also phosphorylate this residue. Phosphorylation at Tyr-397 promotes interaction with SRC and SRC family members, leading to phosphorylation at Tyr-576, Tyr-577 and at additional tyrosine residues. FGR promotes phosphorylation at Tyr-397 and Tyr-576. FER promotes phosphorylation at Tyr-577, Tyr-861 and Tyr-925, even when cells are not adherent. Tyr-397, Tyr-576 and Ser-722 are phosphorylated only when cells are adherent. Phosphorylation at Tyr-397 is important for interaction with BMX, PIK3R1 and SHC1. Phosphorylation at Tyr-925 is important for interaction with GRB2. Dephosphorylated by PTPN11; PTPN11 is recruited to PTK2 via EPHA2 (tyrosine phosphorylated). Microtubule-induced dephosphorylation at Tyr-397 is crucial for the induction of focal adhesion disassembly; this dephosphorylation could be catalyzed by PTPN11 and regulated by ZFYVE21. Phosphorylation on tyrosine residues is enhanced by NTN1. In terms of processing, sumoylated; this enhances autophosphorylation. In terms of tissue distribution, detected in B and T-lymphocytes. Isoform 1 and isoform 6 are detected in lung fibroblasts (at protein level). Ubiquitous. Expressed in epithelial cells (at protein level).

The protein localises to the cell junction. It is found in the focal adhesion. The protein resides in the cell membrane. It localises to the cytoplasm. Its subcellular location is the perinuclear region. The protein localises to the cell cortex. It is found in the cytoskeleton. The protein resides in the microtubule organizing center. It localises to the centrosome. Its subcellular location is the nucleus. The protein localises to the cilium basal body. The catalysed reaction is L-tyrosyl-[protein] + ATP = O-phospho-L-tyrosyl-[protein] + ADP + H(+). Its activity is regulated as follows. Subject to autoinhibition, mediated by interactions between the FERM domain and the kinase domain. Activated by autophosphorylation at Tyr-397. This promotes interaction with SRC and phosphorylation at Tyr-576 and Tyr-577 in the kinase activation loop. Phosphorylation at Tyr-576 and Tyr-577 is required for maximal kinase activity. Inhibited by TAC544, TAE226, PF-573,228 and PF-562,271. Functionally, non-receptor protein-tyrosine kinase that plays an essential role in regulating cell migration, adhesion, spreading, reorganization of the actin cytoskeleton, formation and disassembly of focal adhesions and cell protrusions, cell cycle progression, cell proliferation and apoptosis. Required for early embryonic development and placenta development. Required for embryonic angiogenesis, normal cardiomyocyte migration and proliferation, and normal heart development. Regulates axon growth and neuronal cell migration, axon branching and synapse formation; required for normal development of the nervous system. Plays a role in osteogenesis and differentiation of osteoblasts. Functions in integrin signal transduction, but also in signaling downstream of numerous growth factor receptors, G-protein coupled receptors (GPCR), EPHA2, netrin receptors and LDL receptors. Forms multisubunit signaling complexes with SRC and SRC family members upon activation; this leads to the phosphorylation of additional tyrosine residues, creating binding sites for scaffold proteins, effectors and substrates. Regulates numerous signaling pathways. Promotes activation of phosphatidylinositol 3-kinase and the AKT1 signaling cascade. Promotes activation of MAPK1/ERK2, MAPK3/ERK1 and the MAP kinase signaling cascade. Promotes localized and transient activation of guanine nucleotide exchange factors (GEFs) and GTPase-activating proteins (GAPs), and thereby modulates the activity of Rho family GTPases. Signaling via CAS family members mediates activation of RAC1. Phosphorylates NEDD9 following integrin stimulation. Recruits the ubiquitin ligase MDM2 to P53/TP53 in the nucleus, and thereby regulates P53/TP53 activity, P53/TP53 ubiquitination and proteasomal degradation. Phosphorylates SRC; this increases SRC kinase activity. Phosphorylates ACTN1, ARHGEF7, GRB7, RET and WASL. Promotes phosphorylation of PXN and STAT1; most likely PXN and STAT1 are phosphorylated by a SRC family kinase that is recruited to autophosphorylated PTK2/FAK1, rather than by PTK2/FAK1 itself. Promotes phosphorylation of BCAR1; GIT2 and SHC1; this requires both SRC and PTK2/FAK1. Promotes phosphorylation of BMX and PIK3R1. Isoform 6 (FRNK) does not contain a kinase domain and inhibits PTK2/FAK1 phosphorylation and signaling. Its enhanced expression can attenuate the nuclear accumulation of LPXN and limit its ability to enhance serum response factor (SRF)-dependent gene transcription. Isoform 6 (FRNK) does not contain a kinase domain and inhibits PTK2/FAK1 phosphorylation and signaling. Its enhanced expression can attenuate the nuclear accumulation of LPXN and limit its ability to enhance serum response factor (SRF)-dependent gene transcription. The polypeptide is Focal adhesion kinase 1 (Homo sapiens (Human)).